The chain runs to 445 residues: Probable glycine dehydrogenase (decarboxylating) subunit 1 (445 aa).

This sequence belongs to the GcvP family. N-terminal subunit subfamily. The glycine cleavage system is composed of four proteins: P, T, L and H. In this organism, the P 'protein' is a heterodimer of two subunits.

It catalyses the reaction N(6)-[(R)-lipoyl]-L-lysyl-[glycine-cleavage complex H protein] + glycine + H(+) = N(6)-[(R)-S(8)-aminomethyldihydrolipoyl]-L-lysyl-[glycine-cleavage complex H protein] + CO2. The glycine cleavage system catalyzes the degradation of glycine. The P protein binds the alpha-amino group of glycine through its pyridoxal phosphate cofactor; CO(2) is released and the remaining methylamine moiety is then transferred to the lipoamide cofactor of the H protein. The chain is Probable glycine dehydrogenase (decarboxylating) subunit 1 from Citrifermentans bemidjiense (strain ATCC BAA-1014 / DSM 16622 / JCM 12645 / Bem) (Geobacter bemidjiensis).